We begin with the raw amino-acid sequence, 71 residues long: uncharacterized protein (71 aa).

The protein belongs to the varicellovirus ORF57 protein family.

This is an uncharacterized protein from Homo sapiens (Human).